A 901-amino-acid polypeptide reads, in one-letter code: Alpha-actinin-3 (901 aa).

The residue at position 1 (Met1) is an N-acetylmethionine. An actin-binding region spans residues 1-261; sequence MMMVLQPEGL…IMTYVSCFYH (261 aa). Calponin-homology (CH) domains follow at residues 45–149 and 158–264; these read KQQR…LRFA and TSAK…HAFA. Spectrin repeat units lie at residues 288-398, 408-513, 523-634, and 644-747; these read KLME…WLLS, HLAE…ALER, QLQL…MLQE, and RLRR…EVEN. 2 EF-hand domains span residues 760–795 and 796–831; these read EQLNEFRASFNHFDRKRNGMMEPDDFRACLISMGYD and LGEVEFARIMTMVDPNAAGVVTFQAFIDFMTRETAE. Positions 773, 777, 779, 784, 809, and 811 each coordinate Ca(2+).

This sequence belongs to the alpha-actinin family. Homodimer; antiparallel. Also forms heterodimers with ACTN2. Interacts with MYOZ1.

Functionally, F-actin cross-linking protein which is thought to anchor actin to a variety of intracellular structures. This is a bundling protein. The sequence is that of Alpha-actinin-3 (ACTN3) from Bos taurus (Bovine).